The chain runs to 648 residues: Macrolide export ATP-binding/permease protein MacB 1 (648 aa).

The ABC transporter domain maps to 6–244 (LQLSGIRRHF…PAPTTSRADT (239 aa)). 42–49 (GASGSGKS) serves as a coordination point for ATP. The tract at residues 222 to 248 (VVADRRREPTPPSPAPTTSRADTGGRG) is disordered. 4 consecutive transmembrane segments (helical) span residues 273–293 (FLTM…VALG), 521–541 (LTLL…IGVM), 578–598 (LVCL…GVLF), and 613–633 (AVLM…FFPA).

The protein belongs to the ABC transporter superfamily. Macrolide exporter (TC 3.A.1.122) family. Homodimer. Part of the tripartite efflux system MacAB-TolC, which is composed of an inner membrane transporter, MacB, a periplasmic membrane fusion protein, MacA, and an outer membrane component, TolC. The complex forms a large protein conduit and can translocate molecules across both the inner and outer membranes. Interacts with MacA.

Its subcellular location is the cell inner membrane. Part of the tripartite efflux system MacAB-TolC. MacB is a non-canonical ABC transporter that contains transmembrane domains (TMD), which form a pore in the inner membrane, and an ATP-binding domain (NBD), which is responsible for energy generation. Confers resistance against macrolides. The chain is Macrolide export ATP-binding/permease protein MacB 1 from Aeromonas hydrophila subsp. hydrophila (strain ATCC 7966 / DSM 30187 / BCRC 13018 / CCUG 14551 / JCM 1027 / KCTC 2358 / NCIMB 9240 / NCTC 8049).